Consider the following 430-residue polypeptide: C4-dicarboxylate transport protein (430 aa).

A run of 8 helical transmembrane segments spans residues 9–29, 45–65, 79–99, 149–169, 185–205, 223–243, 308–328, and 356–376; these read VLYV…HFYP, LIKM…IAGM, LLYF…ATHL, GEIL…AHLG, VLFG…FGAM, LIGT…GAIA, IYMT…LTWM, and AATL…ILGI.

This sequence belongs to the dicarboxylate/amino acid:cation symporter (DAACS) (TC 2.A.23) family.

It localises to the cell inner membrane. Its function is as follows. Responsible for the transport of dicarboxylates such as succinate, fumarate, and malate from the periplasm across the membrane. This is C4-dicarboxylate transport protein from Burkholderia orbicola (strain AU 1054).